Reading from the N-terminus, the 204-residue chain is ATP phosphoribosyltransferase (204 aa).

This sequence belongs to the ATP phosphoribosyltransferase family. Short subfamily. Heteromultimer composed of HisG and HisZ subunits.

The protein localises to the cytoplasm. It carries out the reaction 1-(5-phospho-beta-D-ribosyl)-ATP + diphosphate = 5-phospho-alpha-D-ribose 1-diphosphate + ATP. The protein operates within amino-acid biosynthesis; L-histidine biosynthesis; L-histidine from 5-phospho-alpha-D-ribose 1-diphosphate: step 1/9. Its function is as follows. Catalyzes the condensation of ATP and 5-phosphoribose 1-diphosphate to form N'-(5'-phosphoribosyl)-ATP (PR-ATP). Has a crucial role in the pathway because the rate of histidine biosynthesis seems to be controlled primarily by regulation of HisG enzymatic activity. This is ATP phosphoribosyltransferase from Staphylococcus aureus (strain Mu3 / ATCC 700698).